Consider the following 206-residue polypeptide: Sortase A (206 aa).

Over 1 to 6 the chain is Cytoplasmic; sequence MKKWTN. A helical membrane pass occupies residues 7–24; sequence RLMTIAGVVLILVAAYLF. Topologically, residues 25-206 are extracellular; that stretch reads AKPHIDNYLH…RKIFVATEVK (182 aa). Residues 49 to 69 are disordered; that stretch reads VKEQASKDKKQQAKPQIPKDK. The Ca(2+) site is built by Glu105, Glu108, Asp112, and Asn114. Residue His120 is the Proton donor/acceptor of the active site. Glu171 serves as a coordination point for Ca(2+). Cys184 (acyl-thioester intermediate) is an active-site residue.

The protein belongs to the bacterial sortase family. Class A subfamily. As to quaternary structure, monomer and homodimer; in equilibrium.

Its subcellular location is the cell membrane. It catalyses the reaction The enzyme catalyzes a cell wall sorting reaction in which a surface protein with a sorting signal containing a LPXTG motif is cleaved between the Thr and Gly residue. The resulting threonine carboxyl end of the protein is covalently attached to a pentaglycine cross-bridge of peptidoglycan.. Sortase activity is regulated by monomer-homodimer equilibrium. Mutant cells with monomeric SrtA display more adhesive proteins on the cell surface and are more invasive than wild-type cells, which have majority of SrtA in dimeric form. Dimerization may suppress the enzymatic activity on cell membranes. Stimulated by calcium ions, which promote substrate binding. Calcium ions bind to SrtA and modulate both the structure and dynamics of a large active site loop. Can also be stimulated, to a lesser extent, by Mg(2+) and Mn(2+). Inhibited by sulfhydryl-modifying reagents. Functionally, transpeptidase that anchors surface proteins to the cell wall. Recognizes and modifies its substrate by proteolytic cleavage of a C-terminal sorting signal. Following cleavage, a covalent intermediate is formed via a thioester bond between the sortase and its substrate, which is then transferred and covalently attached to the cell wall. This sortase recognizes a Leu-Pro-x-Thr-Gly (LPXTG) motif, which is cleaved by the sortase between the threonine and glycine residues. Utilizes lipid II as the peptidoglycan substrate for the sorting reaction. Responsible for the display of important virulence factors. Important for interactions with the host and host colonization during infection. This chain is Sortase A, found in Staphylococcus aureus (strain NCTC 8325 / PS 47).